A 350-amino-acid polypeptide reads, in one-letter code: Histidinol-phosphate aminotransferase 1 (350 aa).

The residue at position 210 (Lys-210) is an N6-(pyridoxal phosphate)lysine.

This sequence belongs to the class-II pyridoxal-phosphate-dependent aminotransferase family. Histidinol-phosphate aminotransferase subfamily. As to quaternary structure, homodimer. The cofactor is pyridoxal 5'-phosphate.

It catalyses the reaction L-histidinol phosphate + 2-oxoglutarate = 3-(imidazol-4-yl)-2-oxopropyl phosphate + L-glutamate. The protein operates within amino-acid biosynthesis; L-histidine biosynthesis; L-histidine from 5-phospho-alpha-D-ribose 1-diphosphate: step 7/9. The polypeptide is Histidinol-phosphate aminotransferase 1 (Pseudomonas fluorescens (strain ATCC BAA-477 / NRRL B-23932 / Pf-5)).